We begin with the raw amino-acid sequence, 336 residues long: MPKTETYPRLLADIGGTNARFGLEVAPRQIECIEVLRCEDFESLSDAVRFYLSKCKESLKLHPIYGSFAVATPIMGDFVQMTNNHWTFSIETTRQCLTLKKLLVINDFVAQAYAISAMQENDLAQIGGIKCEINAPKAILGPGTGLGVSTLIQNSDGSLKVLPGEGGHVSFAPFDDLEILVWQYARSKFNHVSAERFLSGSGLVLIYEALSKRKGLEKVAKLSKAELTPQIISECALNGDYPICRLTLDTFCSMLGTLAADVALTLGARGGVYLCGGIIPRFIDYFKTSPFRARFETKGRMGAFLASIPVHVVLKKTPGLDGAGIALENYLLHDKI.

ATP is bound at residue 12 to 17 (ADIGGT).

Belongs to the bacterial glucokinase family.

The protein resides in the cytoplasm. The catalysed reaction is D-glucose + ATP = D-glucose 6-phosphate + ADP + H(+). This chain is Glucokinase, found in Helicobacter pylori (strain ATCC 700392 / 26695) (Campylobacter pylori).